The sequence spans 79 residues: Acyl carrier protein (79 aa).

The 76-residue stretch at 2–77 (ADHASKIKDI…DAVAYLEAKV (76 aa)) folds into the Carrier domain. At serine 37 the chain carries O-(pantetheine 4'-phosphoryl)serine.

Belongs to the acyl carrier protein (ACP) family. 4'-phosphopantetheine is transferred from CoA to a specific serine of apo-ACP by AcpS. This modification is essential for activity because fatty acids are bound in thioester linkage to the sulfhydryl of the prosthetic group.

It is found in the cytoplasm. It functions in the pathway lipid metabolism; fatty acid biosynthesis. Functionally, carrier of the growing fatty acid chain in fatty acid biosynthesis. The protein is Acyl carrier protein of Gemmatimonas aurantiaca (strain DSM 14586 / JCM 11422 / NBRC 100505 / T-27).